Consider the following 144-residue polypeptide: Bacilliredoxin BrxA (144 aa).

Catalysis depends on nucleophile residues C53 and C55. Position 53 is an S-bacillithiol cysteine disulfide (C53). The CXC active site motif signature appears at 53-55 (CGC). C53 and C55 are oxidised to a cystine.

The protein belongs to the bacilliredoxin family. Post-translationally, N-terminal Cys of the CXC active site motif can react with bacillithiol (BSH) to form mixed disulfides. S-bacillithiolation protects Cys residues against overoxidation by acting as a redox switch in response to oxidative stress.

S-bacillithiolation is the formation of mixed disulfide bonds between protein thiols and the general thiol reductant bacillithiol (BSH) under oxidative stress. BSH is an equivalent of glutathione (GSH) in Firmicutes. This protein is a dithiol bacilliredoxin, which debacillithiolates (removes BSH) the S-bacillithiolated OhrR (OhrR-SSB) in vitro and in vivo NaOCl-generated S-bacillithiolated MetE (MetE-SSB). Involved in maintaining redox homeostasis in response to disulfide stress conditions. Has a redox potential of -130 mV. Displays weak protein disulfide isomerase activity in vitro. This Bacillus subtilis (strain 168) protein is Bacilliredoxin BrxA.